Here is a 559-residue protein sequence, read N- to C-terminus: Hepatocyte nuclear factor 1-beta (559 aa).

The segment at 1–31 (MVSKLTSLQQELLSALLSSGVTKEVLVQALE) is dimerization. The HNF-p1 domain occupies 1-32 (MVSKLTSLQQELLSALLSSGVTKEVLVQALEE). 4 positions are modified to phosphoserine: Ser49, Ser52, Ser75, and Ser80. The region spanning 93–188 (KELQALNTEE…ILRQFNQTVQ (96 aa)) is the POU-specific atypical domain. The homeobox; HNF1-type DNA-binding region spans 231 to 312 (MRRNRFKWGP…RRKEEEAFRQ (82 aa)). The segment covering 328–341 (NTLLSHSSPHHQPS) has biased composition (low complexity). The tract at residues 328-371 (NTLLSHSSPHHQPSTSPPNKLPGVRYNQQGNNEVTSSSTISHHG) is disordered. Polar residues predominate over residues 353–371 (YNQQGNNEVTSSSTISHHG).

The protein belongs to the HNF1 homeobox family. Binds DNA as a dimer. Can form homodimer or heterodimer with HNF1-alpha. Interacts (via HNF-p1 domain) with PCBD1; the interaction increases its transactivation activity.

It localises to the nucleus. Transcription factor that binds to the inverted palindrome 5'-GTTAATNATTAAC-3'. Binds to the FPC element in the cAMP regulatory unit of the PLAU gene. Transcriptional activity is increased by coactivator PCBD1. This chain is Hepatocyte nuclear factor 1-beta (HNF1B), found in Sus scrofa (Pig).